The following is a 93-amino-acid chain: DNA-binding protein HB1 (93 aa).

This sequence belongs to the bacterial histone-like protein family. Homodimer.

Functionally, histone-like DNA-binding protein which is capable of wrapping DNA to stabilize it, and thus to prevent its denaturation under extreme environmental conditions. The protein is DNA-binding protein HB1 (hup) of Bifidobacterium longum (strain NCC 2705).